Reading from the N-terminus, the 815-residue chain is uncharacterized protein (815 aa).

An N-terminal signal peptide occupies residues 1-25 (MVVMKKKRILIVSAIVLLFLTVASA). 6 helical membrane-spanning segments follow: residues 127–147 (FGEA…CVRG), 157–177 (ILFI…GYYM), 311–331 (SFIA…LAFF), 333–353 (FLLQ…FILA), 372–392 (VYLL…TCFI), and 401–421 (GFGM…IGFH). The segment at 483-815 (KDGSNADGVT…DRLRRDERTR (333 aa)) is disordered. A compositionally biased stretch (polar residues) spans 513–543 (HAISRTPQKETANGIANHNSRSLKRNPQTLS). Basic and acidic residues-rich tracts occupy residues 544–563 (KEQE…ENKQ) and 599–614 (QDKK…KEYV). Polar residues predominate over residues 619-630 (KQPNNQQQTDDA). Over residues 648 to 658 (ENEKDTERTDQ) the composition is skewed to basic and acidic residues. Residues 665 to 678 (EQNQNLETDQQQDF) show a composition bias toward polar residues. Positions 696-705 (KTAEIKRSDQ) are enriched in basic and acidic residues. Polar residues predominate over residues 720–732 (SPQSTKVENQPIA). Residues 734–757 (NERKIRPSEPAKVHSDGIRVDEKQ) are compositionally biased toward basic and acidic residues. Over residues 773-793 (PSSQTIKRTEQSVNSFDQVSL) the composition is skewed to polar residues. Residues 796 to 815 (IARRSSSKVEDRLRRDERTR) are compositionally biased toward basic and acidic residues.

The protein localises to the cell membrane. This is an uncharacterized protein from Bacillus subtilis (strain 168).